A 290-amino-acid polypeptide reads, in one-letter code: Arylamine N-acetyltransferase 1 (290 aa).

Methionine 1 carries the N-acetylmethionine modification. Cysteine 68 (acyl-thioester intermediate) is an active-site residue. Serine 103 provides a ligand contact to CoA. 106 to 107 (IH) contacts substrate. Residues histidine 107 and aspartate 122 contribute to the active site. CoA-binding residues include tyrosine 208 and serine 287.

It belongs to the arylamine N-acetyltransferase family.

The protein localises to the cytoplasm. The enzyme catalyses an arylamine + acetyl-CoA = an N-acetylarylamine + CoA. In terms of biological role, participates in the detoxification of a plethora of hydrazine and arylamine drugs. The protein is Arylamine N-acetyltransferase 1 (NAT1) of Mesocricetus auratus (Golden hamster).